The chain runs to 521 residues: Apolipoprotein N-acyltransferase (521 aa).

6 helical membrane-spanning segments follow: residues Leu34–Val54, Ala64–Leu84, Leu100–Leu120, Leu137–Phe157, Val176–Ala196, and Tyr206–Ala226. The CN hydrolase domain maps to Ile240–Leu480. Catalysis depends on Glu281, which acts as the Proton acceptor. Residue Lys341 is part of the active site. Catalysis depends on Cys392, which acts as the Nucleophile. Residues Ala488–Ala508 traverse the membrane as a helical segment.

Belongs to the CN hydrolase family. Apolipoprotein N-acyltransferase subfamily.

The protein resides in the cell inner membrane. It carries out the reaction N-terminal S-1,2-diacyl-sn-glyceryl-L-cysteinyl-[lipoprotein] + a glycerophospholipid = N-acyl-S-1,2-diacyl-sn-glyceryl-L-cysteinyl-[lipoprotein] + a 2-acyl-sn-glycero-3-phospholipid + H(+). It functions in the pathway protein modification; lipoprotein biosynthesis (N-acyl transfer). Functionally, catalyzes the phospholipid dependent N-acylation of the N-terminal cysteine of apolipoprotein, the last step in lipoprotein maturation. In Gloeobacter violaceus (strain ATCC 29082 / PCC 7421), this protein is Apolipoprotein N-acyltransferase.